Reading from the N-terminus, the 316-residue chain is Olfactory receptor 1165 (316 aa).

Residues 1–28 (MMLDLGNESSVTMFILSGFSEYPHLHAP) lie on the Extracellular side of the membrane. Residue N7 is glycosylated (N-linked (GlcNAc...) asparagine). A helical membrane pass occupies residues 29-50 (LFLLFFMIYTVTLIGNLGIIVV). Residues 51 to 61 (RKVNPKLHTPM) are Cytoplasmic-facing. A helical membrane pass occupies residues 62–80 (YFFLSHLSFLDICYSSVFT). The Extracellular portion of the chain corresponds to 81–99 (PKLLEILIVEDRTISFKGC). C99 and C181 form a disulfide bridge. Residues 100 to 122 (MTQFFLICAFVITEMFMLAVMAY) traverse the membrane as a helical segment. At 123–141 (DRFVAVCNPLLYTVSMSPK) the chain is on the cytoplasmic side. A helical transmembrane segment spans residues 142–166 (LCAFLVAGTYMWGVLCSLTITYSLL). Over 167 to 205 (QLSYCGPNIINHFGCEYSAILSLSCSDPTFSQVVCLTIS) the chain is Extracellular. A helical membrane pass occupies residues 206-228 (IFNETCSLLIILASYVFIVVTII). Topologically, residues 229–239 (KMPSKGGLQKA) are cytoplasmic. Residues 240–263 (FSTCSSHLTAISIFHGIILLLYCV) form a helical membrane-spanning segment. The Extracellular portion of the chain corresponds to 264–268 (PNSKN). The chain crosses the membrane as a helical span at residues 269-291 (SWLVVKVATVLFTVMIPMLNPLI). The Cytoplasmic portion of the chain corresponds to 292-316 (YSLRNKDVKGTVSRLMHLKLQAHST).

The protein belongs to the G-protein coupled receptor 1 family.

The protein resides in the cell membrane. Its function is as follows. Olfactory receptor. This Mus musculus (Mouse) protein is Olfactory receptor 1165.